The chain runs to 234 residues: Proteasome subunit alpha (234 aa).

This sequence belongs to the peptidase T1A family. The 20S proteasome core is composed of 14 alpha and 14 beta subunits that assemble into four stacked heptameric rings, resulting in a barrel-shaped structure. The two inner rings, each composed of seven catalytic beta subunits, are sandwiched by two outer rings, each composed of seven alpha subunits. The catalytic chamber with the active sites is on the inside of the barrel. Has a gated structure, the ends of the cylinder being occluded by the N-termini of the alpha-subunits. Is capped at one or both ends by the proteasome regulatory ATPase, PAN.

It is found in the cytoplasm. The formation of the proteasomal ATPase PAN-20S proteasome complex, via the docking of the C-termini of PAN into the intersubunit pockets in the alpha-rings, triggers opening of the gate for substrate entry. Interconversion between the open-gate and close-gate conformations leads to a dynamic regulation of the 20S proteasome proteolysis activity. Functionally, component of the proteasome core, a large protease complex with broad specificity involved in protein degradation. The chain is Proteasome subunit alpha from Picrophilus torridus (strain ATCC 700027 / DSM 9790 / JCM 10055 / NBRC 100828 / KAW 2/3).